Reading from the N-terminus, the 410-residue chain is Cysteine desulfurase IscS (410 aa).

Residues 80 to 81 (AT), Asn-160, Gln-188, and 208 to 210 (SGH) each bind pyridoxal 5'-phosphate. Position 211 is an N6-(pyridoxal phosphate)lysine (Lys-211). Thr-248 serves as a coordination point for pyridoxal 5'-phosphate. Residue Cys-334 is the Cysteine persulfide intermediate of the active site. Cys-334 is a binding site for [2Fe-2S] cluster.

It belongs to the class-V pyridoxal-phosphate-dependent aminotransferase family. NifS/IscS subfamily. As to quaternary structure, homodimer. Forms a heterotetramer with IscU, interacts with other sulfur acceptors. Pyridoxal 5'-phosphate serves as cofactor.

The protein localises to the cytoplasm. It carries out the reaction (sulfur carrier)-H + L-cysteine = (sulfur carrier)-SH + L-alanine. It functions in the pathway cofactor biosynthesis; iron-sulfur cluster biosynthesis. Its function is as follows. Master enzyme that delivers sulfur to a number of partners involved in Fe-S cluster assembly, tRNA modification or cofactor biosynthesis. Catalyzes the removal of elemental sulfur atoms from cysteine to produce alanine. Functions as a sulfur delivery protein for Fe-S cluster synthesis onto IscU, an Fe-S scaffold assembly protein, as well as other S acceptor proteins. This Rickettsia massiliae (strain Mtu5) protein is Cysteine desulfurase IscS.